Here is a 360-residue protein sequence, read N- to C-terminus: uncharacterized protein (360 aa).

Positions 4–235 (LSLQHIQKIY…PANMFVAGFI (232 aa)) constitute an ABC transporter domain. 37–44 (GPSGCGKS) serves as a coordination point for ATP.

Belongs to the ABC transporter superfamily.

This is an uncharacterized protein from Escherichia coli O157:H7.